We begin with the raw amino-acid sequence, 234 residues long: MAYKRVLLKLSGEALMGEKPYGIDPAIVQSIAEDVSKVVENNVQLAIVVGGGNIFRGLKGSADGMDRATADYVGMLATVMNAISLQDGLERVGVATRVQTAIEMQEIAEPYIRRRAMRHLEKGRVVVFGGGCGNPFFTTDTTAALRAAEINAEVVMKATKVDGVYNCDPNKFKDAKKYSSLSYQQVLSDEIAVMDSTAIALCKDNNIPIMVFDIFKKGNISKAVDGDPIGSLIS.

9 to 12 (KLSG) contacts ATP. Position 51 (Gly51) interacts with UMP. ATP is bound by residues Gly52 and Arg56. Residues Asp71 and 132–139 (CGNPFFTT) contribute to the UMP site. ATP-binding residues include Thr159, Tyr165, and Asp168.

It belongs to the UMP kinase family. In terms of assembly, homohexamer.

It is found in the cytoplasm. The catalysed reaction is UMP + ATP = UDP + ADP. The protein operates within pyrimidine metabolism; CTP biosynthesis via de novo pathway; UDP from UMP (UMPK route): step 1/1. With respect to regulation, inhibited by UTP. Its function is as follows. Catalyzes the reversible phosphorylation of UMP to UDP. In Prochlorococcus marinus (strain MIT 9301), this protein is Uridylate kinase.